Here is a 268-residue protein sequence, read N- to C-terminus: Eukaryotic translation initiation factor 3 subunit G-2 (268 aa).

An RRM domain is found at S187 to P265.

The protein belongs to the eIF-3 subunit G family. Component of the eukaryotic translation initiation factor 3 (eIF-3) complex. The eIF-3 complex interacts with pix.

The protein resides in the cytoplasm. In terms of biological role, RNA-binding component of the eukaryotic translation initiation factor 3 (eIF-3) complex, which is involved in protein synthesis of a specialized repertoire of mRNAs and, together with other initiation factors, stimulates binding of mRNA and methionyl-tRNAi to the 40S ribosome. The eIF-3 complex specifically targets and initiates translation of a subset of mRNAs involved in cell proliferation. This subunit can bind 18S rRNA. This Drosophila willistoni (Fruit fly) protein is Eukaryotic translation initiation factor 3 subunit G-2.